Reading from the N-terminus, the 58-residue chain is Large ribosomal subunit protein uL30 (58 aa).

Belongs to the universal ribosomal protein uL30 family. Part of the 50S ribosomal subunit.

The polypeptide is Large ribosomal subunit protein uL30 (Blochmanniella floridana).